Reading from the N-terminus, the 177-residue chain is Large ribosomal subunit protein uL6 (177 aa).

This sequence belongs to the universal ribosomal protein uL6 family. As to quaternary structure, part of the 50S ribosomal subunit.

Functionally, this protein binds to the 23S rRNA, and is important in its secondary structure. It is located near the subunit interface in the base of the L7/L12 stalk, and near the tRNA binding site of the peptidyltransferase center. This Nitrobacter winogradskyi (strain ATCC 25391 / DSM 10237 / CIP 104748 / NCIMB 11846 / Nb-255) protein is Large ribosomal subunit protein uL6.